Reading from the N-terminus, the 157-residue chain is 2-C-methyl-D-erythritol 2,4-cyclodiphosphate synthase (157 aa).

2 residues coordinate a divalent metal cation: Asp9 and His11. 4-CDP-2-C-methyl-D-erythritol 2-phosphate contacts are provided by residues 9–11 and 35–36; these read DVH and HS. His43 lines the a divalent metal cation pocket. Residues 57–59, 62–66, 101–107, 133–136, Phe140, and Arg143 contribute to the 4-CDP-2-C-methyl-D-erythritol 2-phosphate site; these read DIG, FPDTD, AEKPKMA, and TTTE.

This sequence belongs to the IspF family. In terms of assembly, homotrimer. The cofactor is a divalent metal cation.

It catalyses the reaction 4-CDP-2-C-methyl-D-erythritol 2-phosphate = 2-C-methyl-D-erythritol 2,4-cyclic diphosphate + CMP. The protein operates within isoprenoid biosynthesis; isopentenyl diphosphate biosynthesis via DXP pathway; isopentenyl diphosphate from 1-deoxy-D-xylulose 5-phosphate: step 4/6. Its function is as follows. Involved in the biosynthesis of isopentenyl diphosphate (IPP) and dimethylallyl diphosphate (DMAPP), two major building blocks of isoprenoid compounds. Catalyzes the conversion of 4-diphosphocytidyl-2-C-methyl-D-erythritol 2-phosphate (CDP-ME2P) to 2-C-methyl-D-erythritol 2,4-cyclodiphosphate (ME-CPP) with a corresponding release of cytidine 5-monophosphate (CMP). The polypeptide is 2-C-methyl-D-erythritol 2,4-cyclodiphosphate synthase (Listeria innocua serovar 6a (strain ATCC BAA-680 / CLIP 11262)).